Consider the following 428-residue polypeptide: Phosphoribosylamine--glycine ligase (428 aa).

The 207-residue stretch at 107–313 folds into the ATP-grasp domain; that stretch reads KQVMKTYNIP…LVNVIESLLD (207 aa). 133-194 contributes to the ATP binding site; the sequence is VEAEGVPIVI…EEYLEGEELS (62 aa). Mg(2+)-binding residues include E283 and N285.

This sequence belongs to the GARS family. It depends on Mg(2+) as a cofactor. Mn(2+) is required as a cofactor.

It carries out the reaction 5-phospho-beta-D-ribosylamine + glycine + ATP = N(1)-(5-phospho-beta-D-ribosyl)glycinamide + ADP + phosphate + H(+). The protein operates within purine metabolism; IMP biosynthesis via de novo pathway; N(1)-(5-phospho-D-ribosyl)glycinamide from 5-phospho-alpha-D-ribose 1-diphosphate: step 2/2. This is Phosphoribosylamine--glycine ligase from Halalkalibacterium halodurans (strain ATCC BAA-125 / DSM 18197 / FERM 7344 / JCM 9153 / C-125) (Bacillus halodurans).